Reading from the N-terminus, the 469-residue chain is Cysteine--tRNA ligase (469 aa).

Cysteine 29 contributes to the Zn(2+) binding site. The 'HIGH' region motif lies at 31–41 (PTVYNYIHIGN). Residues cysteine 210, histidine 235, and glutamate 239 each contribute to the Zn(2+) site. Residues 267 to 271 (KMSKS) carry the 'KMSKS' region motif. Lysine 270 is an ATP binding site.

The protein belongs to the class-I aminoacyl-tRNA synthetase family. As to quaternary structure, monomer. The cofactor is Zn(2+).

It localises to the cytoplasm. The catalysed reaction is tRNA(Cys) + L-cysteine + ATP = L-cysteinyl-tRNA(Cys) + AMP + diphosphate. The chain is Cysteine--tRNA ligase from Thermosipho africanus (strain TCF52B).